A 185-amino-acid chain; its full sequence is Ribosome-recycling factor (185 aa).

Belongs to the RRF family.

It is found in the cytoplasm. Its function is as follows. Responsible for the release of ribosomes from messenger RNA at the termination of protein biosynthesis. May increase the efficiency of translation by recycling ribosomes from one round of translation to another. This Salinispora tropica (strain ATCC BAA-916 / DSM 44818 / JCM 13857 / NBRC 105044 / CNB-440) protein is Ribosome-recycling factor.